Here is a 378-residue protein sequence, read N- to C-terminus: Acetylornithine deacetylase (378 aa).

H76 serves as a coordination point for Zn(2+). D78 is a catalytic residue. D108 contacts Zn(2+). The active site involves E140. Residues E141, E165, and H351 each contribute to the Zn(2+) site.

The protein belongs to the peptidase M20A family. ArgE subfamily. Homodimer. The cofactor is Zn(2+). Requires Co(2+) as cofactor. It depends on glutathione as a cofactor.

The protein resides in the cytoplasm. It carries out the reaction N(2)-acetyl-L-ornithine + H2O = L-ornithine + acetate. It functions in the pathway amino-acid biosynthesis; L-arginine biosynthesis; L-ornithine from N(2)-acetyl-L-ornithine (linear): step 1/1. Functionally, catalyzes the hydrolysis of the amide bond of N(2)-acetylated L-amino acids. Cleaves the acetyl group from N-acetyl-L-ornithine to form L-ornithine, an intermediate in L-arginine biosynthesis pathway, and a branchpoint in the synthesis of polyamines. The protein is Acetylornithine deacetylase of Aliivibrio fischeri (strain MJ11) (Vibrio fischeri).